Here is a 417-residue protein sequence, read N- to C-terminus: Proteasome-activating nucleotidase (417 aa).

Positions Ser24–Thr78 form a coiled coil. ATP is bound by residues Gly203–Leu208 and His342. Residues Met415–Ala417 are docks into pockets in the proteasome alpha-ring to cause gate opening.

This sequence belongs to the AAA ATPase family. As to quaternary structure, homohexamer. The hexameric complex has a two-ring architecture resembling a top hat that caps the 20S proteasome core at one or both ends. Upon ATP-binding, the C-terminus of PAN interacts with the alpha-rings of the proteasome core by binding to the intersubunit pockets.

It localises to the cytoplasm. ATPase which is responsible for recognizing, binding, unfolding and translocation of substrate proteins into the archaeal 20S proteasome core particle. Is essential for opening the gate of the 20S proteasome via an interaction with its C-terminus, thereby allowing substrate entry and access to the site of proteolysis. Thus, the C-termini of the proteasomal ATPase function like a 'key in a lock' to induce gate opening and therefore regulate proteolysis. Unfolding activity requires energy from ATP hydrolysis, whereas ATP binding alone promotes ATPase-20S proteasome association which triggers gate opening, and supports translocation of unfolded substrates. The chain is Proteasome-activating nucleotidase from Methanocella arvoryzae (strain DSM 22066 / NBRC 105507 / MRE50).